A 68-amino-acid chain; its full sequence is ATP synthase subunit c (68 aa).

Transmembrane regions (helical) follow at residues 5–25 (AAAIAIGLAALGAGLGNGMIV) and 47–67 (FIGVALVEAIPIIAAVIAFMV).

The protein belongs to the ATPase C chain family. In terms of assembly, F-type ATPases have 2 components, F(1) - the catalytic core - and F(0) - the membrane proton channel. F(1) has five subunits: alpha(3), beta(3), gamma(1), delta(1), epsilon(1). F(0) has three main subunits: a(1), b(2) and c(10-14). The alpha and beta chains form an alternating ring which encloses part of the gamma chain. F(1) is attached to F(0) by a central stalk formed by the gamma and epsilon chains, while a peripheral stalk is formed by the delta and b chains.

Its subcellular location is the cell membrane. F(1)F(0) ATP synthase produces ATP from ADP in the presence of a proton or sodium gradient. F-type ATPases consist of two structural domains, F(1) containing the extramembraneous catalytic core and F(0) containing the membrane proton channel, linked together by a central stalk and a peripheral stalk. During catalysis, ATP synthesis in the catalytic domain of F(1) is coupled via a rotary mechanism of the central stalk subunits to proton translocation. Functionally, key component of the F(0) channel; it plays a direct role in translocation across the membrane. A homomeric c-ring of between 10-14 subunits forms the central stalk rotor element with the F(1) delta and epsilon subunits. The sequence is that of ATP synthase subunit c from Oceanobacillus iheyensis (strain DSM 14371 / CIP 107618 / JCM 11309 / KCTC 3954 / HTE831).